The primary structure comprises 366 residues: Aminomethyltransferase (366 aa).

Belongs to the GcvT family. As to quaternary structure, the glycine cleavage system is composed of four proteins: P, T, L and H.

The enzyme catalyses N(6)-[(R)-S(8)-aminomethyldihydrolipoyl]-L-lysyl-[protein] + (6S)-5,6,7,8-tetrahydrofolate = N(6)-[(R)-dihydrolipoyl]-L-lysyl-[protein] + (6R)-5,10-methylene-5,6,7,8-tetrahydrofolate + NH4(+). In terms of biological role, the glycine cleavage system catalyzes the degradation of glycine. This chain is Aminomethyltransferase, found in Thermosynechococcus vestitus (strain NIES-2133 / IAM M-273 / BP-1).